Here is a 460-residue protein sequence, read N- to C-terminus: Elongation factor 1-alpha (460 aa).

Position 2 is a n,N,N-trimethylglycine (Gly2). Lys3 bears the N6,N6-dimethyllysine; alternate mark. N6-methyllysine; alternate is present on Lys3. The region spanning 6–241 (KQHINIVVIG…DAIEPPVRPT (236 aa)) is the tr-type G domain. The segment at 15–22 (GHVDSGKS) is G1. 15-22 (GHVDSGKS) lines the GTP pocket. Lys31 bears the N6-methyllysine mark. Residues 71–75 (GITID) are G2. Residue Lys80 is modified to N6,N6,N6-trimethyllysine. The segment at 92–95 (DAPG) is G3. GTP is bound by residues 92 to 96 (DAPGH) and 154 to 157 (NKMD). The interval 154 to 157 (NKMD) is G4. Residues 193–195 (SGF) are G5. N6,N6-dimethyllysine; alternate is present on Lys317. The residue at position 317 (Lys317) is an N6-methyllysine; alternate. The residue at position 391 (Lys391) is an N6-methyllysine.

It belongs to the TRAFAC class translation factor GTPase superfamily. Classic translation factor GTPase family. EF-Tu/EF-1A subfamily.

It localises to the cytoplasm. Functionally, this protein promotes the GTP-dependent binding of aminoacyl-tRNA to the A-site of ribosomes during protein biosynthesis. In Aspergillus oryzae (strain ATCC 42149 / RIB 40) (Yellow koji mold), this protein is Elongation factor 1-alpha (tef1).